We begin with the raw amino-acid sequence, 340 residues long: Glycerol-3-phosphate dehydrogenase [NAD(P)+] (340 aa).

Positions 14, 15, 35, and 108 each coordinate NADPH. Sn-glycerol 3-phosphate contacts are provided by K108 and G136. A140 contacts NADPH. Residues K191, D244, S254, R255, and N256 each contribute to the sn-glycerol 3-phosphate site. K191 serves as the catalytic Proton acceptor. R255 provides a ligand contact to NADPH. Residue E281 coordinates NADPH.

This sequence belongs to the NAD-dependent glycerol-3-phosphate dehydrogenase family.

It is found in the cytoplasm. It carries out the reaction sn-glycerol 3-phosphate + NAD(+) = dihydroxyacetone phosphate + NADH + H(+). It catalyses the reaction sn-glycerol 3-phosphate + NADP(+) = dihydroxyacetone phosphate + NADPH + H(+). It functions in the pathway membrane lipid metabolism; glycerophospholipid metabolism. Catalyzes the reduction of the glycolytic intermediate dihydroxyacetone phosphate (DHAP) to sn-glycerol 3-phosphate (G3P), the key precursor for phospholipid synthesis. The protein is Glycerol-3-phosphate dehydrogenase [NAD(P)+] of Pseudomonas aeruginosa (strain LESB58).